The sequence spans 388 residues: Succinate--CoA ligase [ADP-forming] subunit beta (388 aa).

In terms of domain architecture, ATP-grasp spans 9-244; sequence KSLFAEYGLP…PSQDDAREAH (236 aa). ATP is bound by residues Lys46, 53 to 55, Glu99, Thr102, and Glu107; that span reads GRG. Residues Asn199 and Asp213 each contribute to the Mg(2+) site. Residues Asn264 and 321–323 each bind substrate; that span reads GIV.

The protein belongs to the succinate/malate CoA ligase beta subunit family. As to quaternary structure, heterotetramer of two alpha and two beta subunits. The cofactor is Mg(2+).

The enzyme catalyses succinate + ATP + CoA = succinyl-CoA + ADP + phosphate. It carries out the reaction GTP + succinate + CoA = succinyl-CoA + GDP + phosphate. The protein operates within carbohydrate metabolism; tricarboxylic acid cycle; succinate from succinyl-CoA (ligase route): step 1/1. Its function is as follows. Succinyl-CoA synthetase functions in the citric acid cycle (TCA), coupling the hydrolysis of succinyl-CoA to the synthesis of either ATP or GTP and thus represents the only step of substrate-level phosphorylation in the TCA. The beta subunit provides nucleotide specificity of the enzyme and binds the substrate succinate, while the binding sites for coenzyme A and phosphate are found in the alpha subunit. In Shewanella sp. (strain ANA-3), this protein is Succinate--CoA ligase [ADP-forming] subunit beta.